We begin with the raw amino-acid sequence, 214 residues long: Large ribosomal subunit protein uL4 (214 aa).

The interval 43–83 is disordered; that stretch reads RRQAGTHKAKSRSEVNRTTKKSIKQKGSGGARHGSRNAPIF.

It belongs to the universal ribosomal protein uL4 family. As to quaternary structure, part of the 50S ribosomal subunit.

Functionally, one of the primary rRNA binding proteins, this protein initially binds near the 5'-end of the 23S rRNA. It is important during the early stages of 50S assembly. It makes multiple contacts with different domains of the 23S rRNA in the assembled 50S subunit and ribosome. Forms part of the polypeptide exit tunnel. This Hyphomonas neptunium (strain ATCC 15444) protein is Large ribosomal subunit protein uL4.